The following is a 115-amino-acid chain: Protein VCF2 (115 aa).

Positions methionine 1–asparagine 12 are enriched in basic residues. The segment at methionine 1–valine 70 is disordered. Residues phenylalanine 33 to serine 44 are compositionally biased toward polar residues.

It belongs to the VCF family.

In Homo sapiens (Human), this protein is Protein VCF2.